Consider the following 393-residue polypeptide: 1-deoxy-D-xylulose 5-phosphate reductoisomerase (393 aa).

NADPH-binding residues include threonine 13, glycine 14, serine 15, isoleucine 16, and asparagine 128. Lysine 129 is a binding site for 1-deoxy-D-xylulose 5-phosphate. Glutamate 130 serves as a coordination point for NADPH. Aspartate 154 serves as a coordination point for Mn(2+). 1-deoxy-D-xylulose 5-phosphate-binding residues include serine 155, glutamate 156, serine 178, and histidine 201. Glutamate 156 is a binding site for Mn(2+). Position 207 (glycine 207) interacts with NADPH. Positions 214, 219, 220, and 223 each coordinate 1-deoxy-D-xylulose 5-phosphate. Glutamate 223 contributes to the Mn(2+) binding site.

It belongs to the DXR family. Mg(2+) serves as cofactor. Mn(2+) is required as a cofactor.

The enzyme catalyses 2-C-methyl-D-erythritol 4-phosphate + NADP(+) = 1-deoxy-D-xylulose 5-phosphate + NADPH + H(+). The protein operates within isoprenoid biosynthesis; isopentenyl diphosphate biosynthesis via DXP pathway; isopentenyl diphosphate from 1-deoxy-D-xylulose 5-phosphate: step 1/6. Functionally, catalyzes the NADPH-dependent rearrangement and reduction of 1-deoxy-D-xylulose-5-phosphate (DXP) to 2-C-methyl-D-erythritol 4-phosphate (MEP). The chain is 1-deoxy-D-xylulose 5-phosphate reductoisomerase from Acidithiobacillus ferrooxidans (strain ATCC 23270 / DSM 14882 / CIP 104768 / NCIMB 8455) (Ferrobacillus ferrooxidans (strain ATCC 23270)).